Reading from the N-terminus, the 2103-residue chain is uncharacterized protein (2103 aa).

Residues 1-12 are compositionally biased toward low complexity; the sequence is MSVPGTPGAMEP. A disordered region spans residues 1–61; sequence MSVPGTPGAM…DADDQEEEME (61 aa). A compositionally biased stretch (acidic residues) spans 51–61; it reads EDADDQEEEME. A Bromo domain is found at 77–196; that stretch reads YELQQGYRIL…MMLEQKLALL (120 aa). Disordered stretches follow at residues 730 to 750, 853 to 881, 933 to 956, 1224 to 1244, and 1770 to 1817; these read AKHK…ITKK, NREL…SIDS, QSKQ…AKLS, SASP…TLNG, and GATR…STSP. Basic and acidic residues predominate over residues 865–877; sequence DLGKDSPKGEISK. A compositionally biased stretch (polar residues) spans 1224-1234; that stretch reads SASPTISSTGQ. Positions 1235–1244 are enriched in low complexity; that stretch reads PLSSTTTLNG. Residues 1773 to 1794 show a composition bias toward polar residues; that stretch reads RSVSISKRQSRTSLQFHSPGIS. Positions 1795-1808 are enriched in low complexity; sequence TTVPTNVNTNKPQT.

Its subcellular location is the nucleus. This is an uncharacterized protein from Homo sapiens (Human).